Reading from the N-terminus, the 370-residue chain is Quinolinate synthase (370 aa).

Residues histidine 62 and serine 83 each contribute to the iminosuccinate site. Cysteine 128 lines the [4Fe-4S] cluster pocket. Iminosuccinate is bound by residues 154–156 and serine 171; that span reads YAN. Residue cysteine 215 participates in [4Fe-4S] cluster binding. Iminosuccinate is bound by residues 241–243 and threonine 258; that span reads HPE. Cysteine 312 serves as a coordination point for [4Fe-4S] cluster.

The protein belongs to the quinolinate synthase family. Type 1 subfamily. Requires [4Fe-4S] cluster as cofactor.

Its subcellular location is the cytoplasm. It catalyses the reaction iminosuccinate + dihydroxyacetone phosphate = quinolinate + phosphate + 2 H2O + H(+). Its pathway is cofactor biosynthesis; NAD(+) biosynthesis; quinolinate from iminoaspartate: step 1/1. Catalyzes the condensation of iminoaspartate with dihydroxyacetone phosphate to form quinolinate. The protein is Quinolinate synthase of Neisseria gonorrhoeae (strain ATCC 700825 / FA 1090).